The following is a 293-amino-acid chain: Elongation factor Ts (293 aa).

The interval 80–83 (TDFV) is involved in Mg(2+) ion dislocation from EF-Tu.

The protein belongs to the EF-Ts family.

The protein resides in the cytoplasm. In terms of biological role, associates with the EF-Tu.GDP complex and induces the exchange of GDP to GTP. It remains bound to the aminoacyl-tRNA.EF-Tu.GTP complex up to the GTP hydrolysis stage on the ribosome. The chain is Elongation factor Ts from Burkholderia pseudomallei (strain 1106a).